The following is a 305-amino-acid chain: Tyrosine recombinase XerD (305 aa).

Residues 9 to 94 (MQDFGYVEQF…AIRRLFQYLH (86 aa)) enclose the Core-binding (CB) domain. The Tyr recombinase domain occupies 115–299 (RLPKDISEEQ…ATERLKQIHS (185 aa)). Active-site residues include Arg-155, Lys-179, His-251, Arg-254, and His-277. The O-(3'-phospho-DNA)-tyrosine intermediate role is filled by Tyr-286.

It belongs to the 'phage' integrase family. XerD subfamily. In terms of assembly, forms a cyclic heterotetrameric complex composed of two molecules of XerC and two molecules of XerD.

It localises to the cytoplasm. Functionally, site-specific tyrosine recombinase, which acts by catalyzing the cutting and rejoining of the recombining DNA molecules. The XerC-XerD complex is essential to convert dimers of the bacterial chromosome into monomers to permit their segregation at cell division. It also contributes to the segregational stability of plasmids. The sequence is that of Tyrosine recombinase XerD from Vibrio vulnificus (strain CMCP6).